Here is a 308-residue protein sequence, read N- to C-terminus: Elongation factor Ts (308 aa).

The involved in Mg(2+) ion dislocation from EF-Tu stretch occupies residues 80 to 83; it reads TDFV.

This sequence belongs to the EF-Ts family.

It is found in the cytoplasm. Associates with the EF-Tu.GDP complex and induces the exchange of GDP to GTP. It remains bound to the aminoacyl-tRNA.EF-Tu.GTP complex up to the GTP hydrolysis stage on the ribosome. The chain is Elongation factor Ts from Rhizobium etli (strain CIAT 652).